The sequence spans 445 residues: Phosphoglucosamine mutase (445 aa).

Serine 102 functions as the Phosphoserine intermediate in the catalytic mechanism. Mg(2+) contacts are provided by serine 102, aspartate 241, aspartate 243, and aspartate 245. At serine 102 the chain carries Phosphoserine.

Belongs to the phosphohexose mutase family. Mg(2+) serves as cofactor. Post-translationally, activated by phosphorylation.

It catalyses the reaction alpha-D-glucosamine 1-phosphate = D-glucosamine 6-phosphate. In terms of biological role, catalyzes the conversion of glucosamine-6-phosphate to glucosamine-1-phosphate. In Rhodococcus jostii (strain RHA1), this protein is Phosphoglucosamine mutase.